Here is a 133-residue protein sequence, read N- to C-terminus: Large ribosomal subunit protein uL15 (133 aa).

A disordered region spans residues methionine 1–arginine 60.

Belongs to the universal ribosomal protein uL15 family. As to quaternary structure, part of the 50S ribosomal subunit.

In terms of biological role, binds to the 23S rRNA. This Wolinella succinogenes (strain ATCC 29543 / DSM 1740 / CCUG 13145 / JCM 31913 / LMG 7466 / NCTC 11488 / FDC 602W) (Vibrio succinogenes) protein is Large ribosomal subunit protein uL15.